Here is a 114-residue protein sequence, read N- to C-terminus: Large ribosomal subunit protein bL19 (114 aa).

Belongs to the bacterial ribosomal protein bL19 family.

This protein is located at the 30S-50S ribosomal subunit interface and may play a role in the structure and function of the aminoacyl-tRNA binding site. The polypeptide is Large ribosomal subunit protein bL19 (Thermoanaerobacter sp. (strain X514)).